A 327-amino-acid chain; its full sequence is tRNA U34 carboxymethyltransferase (327 aa).

Carboxy-S-adenosyl-L-methionine is bound by residues Lys-91, Trp-105, Lys-110, Gly-130, 181-182 (IE), Met-196, Tyr-200, and Arg-315.

It belongs to the class I-like SAM-binding methyltransferase superfamily. CmoB family. Homotetramer.

It catalyses the reaction carboxy-S-adenosyl-L-methionine + 5-hydroxyuridine(34) in tRNA = 5-carboxymethoxyuridine(34) in tRNA + S-adenosyl-L-homocysteine + H(+). Catalyzes carboxymethyl transfer from carboxy-S-adenosyl-L-methionine (Cx-SAM) to 5-hydroxyuridine (ho5U) to form 5-carboxymethoxyuridine (cmo5U) at position 34 in tRNAs. This Pectobacterium atrosepticum (strain SCRI 1043 / ATCC BAA-672) (Erwinia carotovora subsp. atroseptica) protein is tRNA U34 carboxymethyltransferase.